The sequence spans 154 residues: UPF0225 protein YE2246 (154 aa).

Belongs to the UPF0225 family.

The chain is UPF0225 protein YE2246 from Yersinia enterocolitica serotype O:8 / biotype 1B (strain NCTC 13174 / 8081).